A 122-amino-acid chain; its full sequence is Large ribosomal subunit protein uL14c (122 aa).

It belongs to the universal ribosomal protein uL14 family. In terms of assembly, part of the 50S ribosomal subunit.

Its subcellular location is the plastid. The protein localises to the chloroplast. In terms of biological role, binds to 23S rRNA. The chain is Large ribosomal subunit protein uL14c from Liriodendron tulipifera (Tuliptree).